A 443-amino-acid polypeptide reads, in one-letter code: Xaa-Pro dipeptidase (443 aa).

Asp-246, Asp-257, His-339, Glu-384, and Glu-423 together coordinate Mn(2+).

Belongs to the peptidase M24B family. Bacterial-type prolidase subfamily. The cofactor is Mn(2+).

The catalysed reaction is Xaa-L-Pro dipeptide + H2O = an L-alpha-amino acid + L-proline. Functionally, splits dipeptides with a prolyl residue in the C-terminal position. This is Xaa-Pro dipeptidase from Edwardsiella ictaluri (strain 93-146).